Reading from the N-terminus, the 100-residue chain is Large ribosomal subunit protein uL23 (100 aa).

It belongs to the universal ribosomal protein uL23 family. In terms of assembly, part of the 50S ribosomal subunit. Contacts protein L29, and trigger factor when it is bound to the ribosome.

Its function is as follows. One of the early assembly proteins it binds 23S rRNA. One of the proteins that surrounds the polypeptide exit tunnel on the outside of the ribosome. Forms the main docking site for trigger factor binding to the ribosome. This Vibrio campbellii (strain ATCC BAA-1116) protein is Large ribosomal subunit protein uL23.